We begin with the raw amino-acid sequence, 584 residues long: Extracellular serine/threonine protein kinase FAM20C (584 aa).

Over 1–10 (MKMMLVRRFR) the chain is Cytoplasmic. Residues 1 to 92 (MKMMLVRRFR…PNKHTLRILQ (92 aa)) constitute a propeptide that is removed on maturation. The helical; Signal-anchor for type II membrane protein transmembrane segment at 11-31 (VLILMVFLVACALHIALDLLP) threads the bilayer. Residues 32 to 584 (RLERRGARPS…DTEHRAASAR (553 aa)) are Lumenal-facing. 2 disordered regions span residues 62–81 (QVRGRPGEPPAASSAAGDAG) and 94–159 (FSSD…GDAS). 2 stretches are compositionally biased toward low complexity: residues 71-81 (PAASSAAGDAG) and 95-112 (SSDPSSNLSSHSLEKLPP). N-linked (GlcNAc...) asparagine glycosylation is present at asparagine 101. Serine 106 carries the phosphoserine modification. Residues 116–149 (PAERALRGRDPGALRPHDPAHRPLLRDPGPRRSE) show a composition bias toward basic and acidic residues. The ATP site is built by glutamine 269, lysine 285, and glutamate 306. Mn(2+) is bound at residue glutamate 306. N-linked (GlcNAc...) asparagine glycosylation is present at asparagine 335. A kinase domain region spans residues 354 to 565 (FISPANNICF…AVRDCVERNG (212 aa)). Disulfide bonds link cysteine 362-cysteine 378 and cysteine 367-cysteine 371. Residue 389 to 392 (AAFL) participates in ATP binding. Disulfide bonds link cysteine 426/cysteine 500 and cysteine 501/cysteine 560. Aspartate 458 is an active-site residue. Glutamate 463 contacts ATP. Asparagine 470 carries N-linked (GlcNAc...) asparagine glycosylation. Position 478 (aspartate 478) interacts with ATP. Position 478 (aspartate 478) interacts with Mn(2+).

The protein belongs to the FAM20 family. As to quaternary structure, homodimer; disulfide-linked. Interacts with FAM20A; probably forming a heterotetramer of 2 subunits of FAM20A and 2 subunits of FAM20C. Interacts with protease MBTPS1/S1P; the interaction results in FAM20C cleavage and secretion. Interacts with COPII components SEC23A and SEC24A; transport of FAM20C from the endoplasmic reticulum to the Golgi is likely to be mediated by COPII vesicles. Mn(2+) serves as cofactor. In terms of processing, N-glycosylation is required for folding. Autophosphorylated. Post-translationally, propeptide cleavage by MBTPS1/S1P promotes FAM20C secretion and maximal kinase activity which is essential for efficient osteoblast differentiation and biomineralization. In terms of tissue distribution, widely expressed.

The protein localises to the golgi apparatus membrane. It localises to the secreted. The protein resides in the endoplasmic reticulum. The catalysed reaction is L-seryl-[protein] + ATP = O-phospho-L-seryl-[protein] + ADP + H(+). It carries out the reaction L-threonyl-[protein] + ATP = O-phospho-L-threonyl-[protein] + ADP + H(+). With respect to regulation, serine/threonine protein kinase activity is increased upon interaction with FAM20A. In terms of biological role, golgi serine/threonine protein kinase that phosphorylates secretory pathway proteins within Ser-x-Glu/pSer motifs and plays a key role in biomineralization of bones and teeth. Constitutes the main protein kinase for extracellular proteins, generating the majority of the extracellular phosphoproteome. Mainly phosphorylates proteins within the Ser-x-Glu/pSer motif, but also displays a broader substrate specificity. Phosphorylates ERO1A, enhancing its activity which is required to maintain endoplasmic reticulum redox homeostasis and for oxidative protein folding. During endoplasmic reticulum stress, phosphorylates P4HB/PDIA1 which induces a functional switch, causing P4HB to change from an oxidoreductase to a molecular chaperone. This is critical to maintain ER proteostasis and reduce cell death under ER stress. Phosphorylation of P4HB also promotes its interaction with ERN1, leading to reduced activity of ERN1, a key sensor for the endoplasmic reticulum unfolded protein response. Required for osteoblast differentiation and mineralization. Phosphorylates casein as well as a number of proteins involved in biomineralization such as AMELX, AMTN, ENAM and SPP1/OPN. In addition to its role in biomineralization, also plays a role in lipid homeostasis, wound healing and cell migration and adhesion. In Homo sapiens (Human), this protein is Extracellular serine/threonine protein kinase FAM20C.